A 219-amino-acid chain; its full sequence is Small ribosomal subunit protein uS3c (219 aa).

In terms of domain architecture, KH type-2 spans Ile39–Lys109.

Belongs to the universal ribosomal protein uS3 family. In terms of assembly, part of the 30S ribosomal subunit.

The protein localises to the plastid. It localises to the cyanelle. The polypeptide is Small ribosomal subunit protein uS3c (rps3) (Cyanophora paradoxa).